The primary structure comprises 130 residues: Phosphoribosyl-AMP cyclohydrolase (130 aa).

Position 77 (D77) interacts with Mg(2+). A Zn(2+)-binding site is contributed by C78. Mg(2+) contacts are provided by D79 and D81. Zn(2+) contacts are provided by C95 and C102.

It belongs to the PRA-CH family. In terms of assembly, homodimer. Requires Mg(2+) as cofactor. Zn(2+) is required as a cofactor.

The protein localises to the cytoplasm. The enzyme catalyses 1-(5-phospho-beta-D-ribosyl)-5'-AMP + H2O = 1-(5-phospho-beta-D-ribosyl)-5-[(5-phospho-beta-D-ribosylamino)methylideneamino]imidazole-4-carboxamide. Its pathway is amino-acid biosynthesis; L-histidine biosynthesis; L-histidine from 5-phospho-alpha-D-ribose 1-diphosphate: step 3/9. Catalyzes the hydrolysis of the adenine ring of phosphoribosyl-AMP. In Pseudomonas savastanoi pv. phaseolicola (strain 1448A / Race 6) (Pseudomonas syringae pv. phaseolicola (strain 1448A / Race 6)), this protein is Phosphoribosyl-AMP cyclohydrolase.